A 406-amino-acid chain; its full sequence is O-glycosyltransferase PaGT (406 aa).

Positions 1–26 (MSPPSQIKPPQGTTPVPPSELDPRSD) are disordered.

Belongs to the afumC glycosyltransferase family.

It functions in the pathway mycotoxin biosynthesis. Its function is as follows. O-glycosyltransferase; part of the 2 gene clusters that mediate the biosynthesis of fusicoccins, diterpene glucosides that display phytohormone-like activity and function as potent activators of plasma membrane H(+)-ATPases in plants by modifying 14-3-3 proteins and cause the plant disease constriction canker. The first step in the pathway is performed by the fusicoccadiene synthase PaFS that possesses both prenyl transferase and terpene cyclase activity, converting isopentenyl diphosphate and dimethylallyl diphosphate into geranylgeranyl diphosphate (GGDP) and successively converting GGDP into fusicocca-2,10(14)-diene, a precursor for fusicoccin H. The second step is the oxidation at the C-8 position by the cytochrome P450 monooxygenase PaP450-2 to yield fusicocca-2,10(14)-diene-8-beta-ol. The cytochrome P450 monooxygenase PaP450-1 then catalyzes the hydroxylation at the C-16 position to produce fusicocca-2,10(14)-diene-8-beta,16-diol. The dioxygenase fc-dox then catalyzes the 16-oxydation of fusicocca-2,10(14)-diene-8-beta,16-diol to yield an aldehyde (8-beta-hydroxyfusicocca-1,10(14)-dien-16-al). The short-chain dehydrogenase/reductase fc-sdr catalyzes the reduction of the aldehyde to yield fusicocca-1,10(14)-diene-8-beta,16-diol. The next step is the hydroxylation at C-9 performed by the cytochrome P450 monooxygenase PaP450-3 that leads to fusicoccin H aglycon which is glycosylated to fusicoccin H by the O-glycosyltransferase PaGT. Hydroxylation at C-12 by the cytochrome P450 monooxygenase PaP450-4 leads then to the production of fusicoccin Q and is followed by methylation by the O-methyltransferase PaMT to yield fusicoccin P. Fusicoccin P is further converted to fusicoccin J via prenylation by the O-glucose prenyltransferase PaPT. Cytochrome P450 monooxygenase PaP450-5 then performs hydroxylation at C-19 to yield dideacetyl-fusicoccin A which is acetylated to 3'-O-deacetyl-fusicoccin A by the O-acetyltransferase PaAT-2. Finally, a another acetylation by the O-acetyltransferase PaAT-1 yields fusicoccin A. The chain is O-glycosyltransferase PaGT from Phomopsis amygdali (Fusicoccum amygdali).